Reading from the N-terminus, the 439-residue chain is DNA 3'-5' translocase XPB2 (439 aa).

Positions 1–54 are DRD domain; sequence MVYLRYFKGLILSDAYAPGLKWSDELKAYSALAFKYRDVRKYFLEKEIEVEENV. The 145-residue stretch at 77-221 folds into the Helicase ATP-binding domain; the sequence is VKAWLKEKRG…LYPILVGPIV (145 aa). ATP is bound by residues 90 to 97 and Arg-127; that span reads LPTGAGKT. The DEAH box signature appears at 174-177; the sequence is DEVH. Residues 205-207 carry the RED motif motif; that stretch reads RDD. The interval 227–234 is flexible hinge region; sequence EELAGKYI. The segment at 248–307 is thM region; the sequence is NEEKKRYDGLRKKLKDFLSSRGLKLQNLDDFHRLVKLAAKDKEAREALLAWHESLNIAVN. A Helicase C-terminal domain is found at 311–439; the sequence is KIEKLREILQ…DYRLSRRRRE (129 aa).

The protein belongs to the helicase family. RAD25/XPB subfamily. In terms of assembly, forms a heterodimer with Bax1.

It catalyses the reaction Couples ATP hydrolysis with the unwinding of duplex DNA by translocating in the 3'-5' direction.. The enzyme catalyses ATP + H2O = ADP + phosphate + H(+). Functionally, ATP-dependent DNA translocase which moves along double-stranded DNA (dsDNA) in a 3'-5' direction, unwinding the DNA. The ThM domain grips the resulting 3'-ssDNA tail and functions as a wedge (particularly Phe-278), breaking dsDNA base pairs, probably using the energy from ATP hydrolysis to move along dsDNA. A DNA-dependent ATPase; double-stranded DNA (dsDNA) stimulates the activity more than single-stranded DNA (ssDNA), while Bax1 stimulates ATPase more. In an in vitro assay had no detectable helicase activity. Binds ssDNA better than dsDNA. Has very low ATPase activity that is stimulated by Bax1; dsDNA, Y-form DNA and a DNA substrate with a 6 base pair (bp) bubble in the center stimulate the XPB2-Bax1 ATPase activity about 10- 20-fold more than the absence of DNA. In an XPB2-Bax1-bubble DNA crystal (12 bp of dsDNA, a 6 base bubble and 6 bp of dsDNA) the short 6 bp arm is unwound. The 2 helicase and the ThM domains of XPB2 with the NTD and CRD domains of Bax1 encircle the DNA, forming a tunnel where the 12 bp dsDNA and the ds-ssDNA junction are located. The ThM domain is wedged between the ssDNA tails, with the 5' ssDNA contacting Bax1 and the 3' ssDNA in a channel in XPB2. Bax1 increases the affinity of XPB2 for forked DNA. This Sulfurisphaera tokodaii (strain DSM 16993 / JCM 10545 / NBRC 100140 / 7) (Sulfolobus tokodaii) protein is DNA 3'-5' translocase XPB2.